We begin with the raw amino-acid sequence, 390 residues long: GTP 3',8-cyclase, mitochondrial (390 aa).

The N-terminal 45 residues, 1–45, are a transit peptide targeting the mitochondrion; sequence MRRCFSKITDCHLGFKNSNFLLVGSEVGSGSVTRTITTTTSERLF. The Radical SAM core domain occupies 69–290; it reads KFGRLHTYLR…PSIKRMQDHP (222 aa). GTP is bound at residue R78. Residues C85 and C89 each coordinate [4Fe-4S] cluster. Y91 is an S-adenosyl-L-methionine binding site. C92 provides a ligand contact to [4Fe-4S] cluster. Position 128 (R128) interacts with GTP. G132 lines the S-adenosyl-L-methionine pocket. Residue T159 coordinates GTP. Position 183 (S183) interacts with S-adenosyl-L-methionine. K220 serves as a coordination point for GTP. M254 serves as a coordination point for S-adenosyl-L-methionine. [4Fe-4S] cluster contacts are provided by C317 and C320. 322 to 324 lines the GTP pocket; the sequence is RLR. C334 serves as a coordination point for [4Fe-4S] cluster.

It belongs to the radical SAM superfamily. MoaA family. As to quaternary structure, homodimer. The cofactor is [4Fe-4S] cluster. As to expression, expressed in all organs, with an abundant expression in the roots.

It localises to the mitochondrion matrix. It carries out the reaction GTP + AH2 + S-adenosyl-L-methionine = (8S)-3',8-cyclo-7,8-dihydroguanosine 5'-triphosphate + 5'-deoxyadenosine + L-methionine + A + H(+). It participates in cofactor biosynthesis; molybdopterin biosynthesis. Functionally, catalyzes the cyclization of GTP to (8S)-3',8-cyclo-7,8-dihydroguanosine 5'-triphosphate. This is GTP 3',8-cyclase, mitochondrial (CNX2) from Arabidopsis thaliana (Mouse-ear cress).